We begin with the raw amino-acid sequence, 102 residues long: Large ribosomal subunit protein bL21 (102 aa).

Belongs to the bacterial ribosomal protein bL21 family. As to quaternary structure, part of the 50S ribosomal subunit. Contacts protein L20.

This protein binds to 23S rRNA in the presence of protein L20. The sequence is that of Large ribosomal subunit protein bL21 from Bacillus anthracis (strain A0248).